Reading from the N-terminus, the 383-residue chain is 1-deoxy-D-xylulose 5-phosphate reductoisomerase (383 aa).

T10, G11, S12, I13, G36, K37, N38, and N122 together coordinate NADPH. K123 is a 1-deoxy-D-xylulose 5-phosphate binding site. E124 contributes to the NADPH binding site. D148 lines the Mn(2+) pocket. 4 residues coordinate 1-deoxy-D-xylulose 5-phosphate: S149, E150, S174, and H197. A Mn(2+)-binding site is contributed by E150. An NADPH-binding site is contributed by G203. Residues S210, N215, K216, and E219 each coordinate 1-deoxy-D-xylulose 5-phosphate. E219 lines the Mn(2+) pocket.

Belongs to the DXR family. It depends on Mg(2+) as a cofactor. The cofactor is Mn(2+).

The catalysed reaction is 2-C-methyl-D-erythritol 4-phosphate + NADP(+) = 1-deoxy-D-xylulose 5-phosphate + NADPH + H(+). It participates in isoprenoid biosynthesis; isopentenyl diphosphate biosynthesis via DXP pathway; isopentenyl diphosphate from 1-deoxy-D-xylulose 5-phosphate: step 1/6. Its function is as follows. Catalyzes the NADPH-dependent rearrangement and reduction of 1-deoxy-D-xylulose-5-phosphate (DXP) to 2-C-methyl-D-erythritol 4-phosphate (MEP). The polypeptide is 1-deoxy-D-xylulose 5-phosphate reductoisomerase (Bacillus velezensis (strain DSM 23117 / BGSC 10A6 / LMG 26770 / FZB42) (Bacillus amyloliquefaciens subsp. plantarum)).